Consider the following 174-residue polypeptide: Disulfide bond formation protein B (174 aa).

At 1-14 the chain is on the cytoplasmic side; sequence MLHIFYIYSKSRKF. Residues 15-31 form a helical membrane-spanning segment; it reads WAILICSSISLISIALL. At 32 to 49 the chain is on the periplasmic side; that stretch reads NQFFFLLKPCILCIYQRC. A disulfide bridge connects residues Cys41 and Cys44. The helical transmembrane segment at 50 to 65 threads the bilayer; sequence SLFGITIAGLIALISP. Residues 66–72 lie on the Cytoplasmic side of the membrane; the sequence is KTTLLRL. Residues 73–90 traverse the membrane as a helical segment; the sequence is FSIFIWLYSAIKGLYFSN. The Periplasmic portion of the chain corresponds to 91–146; the sequence is IHMQTTLHPSSSLTCDLFVSFPNWLPLNKWYPIIFDSKISNCYSYPQYLLYLEISQ. Residues Cys105 and Cys132 are joined by a disulfide bond. Residues 147 to 165 form a helical membrane-spanning segment; it reads WMLLFFLIYLIIAIFTIIS. At 166–174 the chain is on the cytoplasmic side; that stretch reads QCHNLFQKK.

Belongs to the DsbB family.

The protein localises to the cell inner membrane. Its function is as follows. Required for disulfide bond formation in some periplasmic proteins. Acts by oxidizing the DsbA protein. In Blochmanniella floridana, this protein is Disulfide bond formation protein B.